Reading from the N-terminus, the 140-residue chain is Pro-vaccinia growth factor (140 aa).

Positions 1–18 (MLINYLMLLFAAMIIRSF) are cleaved as a signal peptide. Residues 19–100 (ADSGNAIETT…SEKPNTTTSY (82 aa)) lie on the Extracellular side of the membrane. N-linked (GlcNAc...) asparagine; by host glycosylation is present at Asn34. Residues 41–81 (AIRLCGPEGDGYCLHGDCIHARDIDGMYCRCSHGYTGIRCQ) enclose the EGF-like domain. 3 cysteine pairs are disulfide-bonded: Cys45–Cys58, Cys53–Cys69, and Cys71–Cys80. The N-linked (GlcNAc...) asparagine; by host glycan is linked to Asn95. A helical transmembrane segment spans residues 101-121 (IPSPGIMLVLVGIIIITCCLL). The Cytoplasmic segment spans residues 122 to 140 (SVYRFTRRTKLPLQDMVVP).

Belongs to the orthopoxvirus OPG019 family. In terms of assembly, vaccinia growth factor interacts with host EGFR and promotes EGFR dimerization.

It localises to the host membrane. The protein resides in the secreted. In terms of biological role, stimulates cellular proliferation (hyperplasia)and mobility around infected cells to promote rapid and efficient spread of infection. This effect is beneficial for virus replication in vivo, because poxviruses replicate possibly better in proliferating cells than in quiescent cells. Acts by binding host EGFR, inducing its dimerization, autophosphorylation and leading to activation of several cellular pathways regulating cell proliferation or cell survival. The activation by host EGFR of mitogen activated protein kinases (MAPK) and extracellular-signal regulated kinases (ERK) are essential for the positive effect of vaccinia growth factor on poxvirus virulence in vivo. In Homo sapiens (Human), this protein is Pro-vaccinia growth factor (OPG019).